Reading from the N-terminus, the 61-residue chain is U-poneritoxin(01)-Om5b (61 aa).

The N-terminal stretch at 1 to 23 (MKLSALSLAFAIILMMTIMYTKA) is a signal peptide. Positions 24-41 (DADASADAEADADAEAEA) are excised as a propeptide. Glutamine amide is present on Gln-59.

This sequence belongs to the formicidae venom precursor-01 superfamily. Truncated sequences of this peptide have also been found in the venom. It is possible they have been cleaved in the venom. Expressed by the venom gland.

The protein resides in the secreted. In terms of biological role, acidic peptide with potent hemolytic activities. It also shows low antimicrobial activities against E.coli (MIC=50uM), as well as histamine-releasing activity (28.3% at 10 uM). Does not have activity against S.aureus, and S.cerevisiae. The protein is U-poneritoxin(01)-Om5b of Odontomachus monticola (Trap-jaw ant).